The sequence spans 414 residues: Phosphoglycerate kinase (414 aa).

(2R)-3-phosphoglycerate contacts are provided by Val-23, Asp-24, Phe-25, Asn-26, Arg-39, Ser-62, His-63, Gly-65, and Arg-66. Phosphotyrosine is present on Tyr-75. A Phosphoserine modification is found at Ser-76. Leu-121 and Arg-122 together coordinate (2R)-3-phosphoglycerate. Ser-143 bears the Phosphoserine mark. (2R)-3-phosphoglycerate is bound by residues His-168 and Arg-169. Phosphoserine occurs at positions 172, 173, and 183. Gly-211 is an ADP binding site. Position 211 (Gly-211) interacts with CDP. Positions 212 and 213 each coordinate AMP. Ala-212 contacts ATP. Residue Ala-212 participates in Mg(2+) binding. Mg(2+)-binding residues include Ala-215 and Asp-216. Residue Asp-216 coordinates CDP. Lys-217 lines the AMP pocket. An ATP-binding site is contributed by Lys-217. Gly-235 lines the ADP pocket. A CDP-binding site is contributed by Gly-235. An AMP-binding site is contributed by Gly-236. An ATP-binding site is contributed by Gly-236. Residues Ser-253 and Ser-260 each carry the phosphoserine modification. A Phosphothreonine modification is found at Thr-299. Gly-310 serves as a coordination point for AMP. Gly-310 provides a ligand contact to ATP. The residue at position 328 (Ser-328) is a Phosphoserine. CDP is bound by residues Gly-335, Ala-337, and Phe-340. Phe-340 serves as a coordination point for ADP. Glu-341 is an AMP binding site. Glu-341 is a binding site for ATP. At Ser-351 the chain carries Phosphoserine. Residues Asp-372 and Thr-373 each coordinate ATP. Asp-372 contributes to the Mg(2+) binding site. A Phosphothreonine modification is found at Thr-373. 4 positions are modified to phosphoserine: Ser-387, Ser-390, Ser-412, and Ser-413.

This sequence belongs to the phosphoglycerate kinase family. Monomer. Mg(2+) serves as cofactor.

It localises to the cytoplasm. The protein localises to the mitochondrion. It carries out the reaction (2R)-3-phosphoglycerate + ATP = (2R)-3-phospho-glyceroyl phosphate + ADP. It participates in carbohydrate degradation; glycolysis; pyruvate from D-glyceraldehyde 3-phosphate: step 2/5. In terms of biological role, catalyzes one of the two ATP producing reactions in the glycolytic pathway via the reversible conversion of 1,3-diphosphoglycerate to 3-phosphoglycerate. Both L- and D- forms of purine and pyrimidine nucleotides can be used as substrates, but the activity is much lower on pyrimidines. Negatively regulates the biosynthesis of acetyl-CoA from pyruvate in the mitochondrion. The polypeptide is Phosphoglycerate kinase (pgk1) (Schizosaccharomyces pombe (strain 972 / ATCC 24843) (Fission yeast)).